We begin with the raw amino-acid sequence, 332 residues long: ATP-dependent (S)-NAD(P)H-hydrate dehydratase (332 aa).

The YjeF C-terminal domain maps to 46-326 (LLERARNIVP…EQIHNVFDDI (281 aa)). (6S)-NADPHX-binding positions include Gly-146 and 199–205 (NAIEFCR). Residues 230–234 (KGLND) and 251–260 (GSGRRCGGQG) contribute to the ATP site. Residue Asp-261 coordinates (6S)-NADPHX.

The protein belongs to the NnrD/CARKD family. Requires Mg(2+) as cofactor.

It catalyses the reaction (6S)-NADHX + ATP = ADP + phosphate + NADH + H(+). The catalysed reaction is (6S)-NADPHX + ATP = ADP + phosphate + NADPH + H(+). Functionally, catalyzes the dehydration of the S-form of NAD(P)HX at the expense of ATP, which is converted to ADP. Together with NAD(P)HX epimerase, which catalyzes the epimerization of the S- and R-forms, the enzyme allows the repair of both epimers of NAD(P)HX, a damaged form of NAD(P)H that is a result of enzymatic or heat-dependent hydration. This Aedes aegypti (Yellowfever mosquito) protein is ATP-dependent (S)-NAD(P)H-hydrate dehydratase.